Here is a 307-residue protein sequence, read N- to C-terminus: Ribosomal RNA small subunit methyltransferase H (307 aa).

S-adenosyl-L-methionine is bound by residues 33 to 35 (GGY), Asp51, Phe78, Asp96, and Gln103.

The protein belongs to the methyltransferase superfamily. RsmH family.

It is found in the cytoplasm. It carries out the reaction cytidine(1402) in 16S rRNA + S-adenosyl-L-methionine = N(4)-methylcytidine(1402) in 16S rRNA + S-adenosyl-L-homocysteine + H(+). Functionally, specifically methylates the N4 position of cytidine in position 1402 (C1402) of 16S rRNA. The sequence is that of Ribosomal RNA small subunit methyltransferase H from Rickettsia conorii (strain ATCC VR-613 / Malish 7).